A 535-amino-acid polypeptide reads, in one-letter code: Protein translocase subunit SecD (535 aa).

The next 6 helical transmembrane spans lie at 5-25 (LTWK…GIIG), 377-397 (AIIG…GAGI), 402-421 (SLLL…GAVL), 425-444 (GIAG…VLIF), 469-489 (WLTI…LFLF), and 496-516 (GFAV…VFVS).

It belongs to the SecD/SecF family. SecD subfamily. As to quaternary structure, forms a complex with SecF. Part of the essential Sec protein translocation apparatus which comprises SecA, SecYEG and auxiliary proteins SecDF. Other proteins may also be involved.

It localises to the cell inner membrane. In terms of biological role, part of the Sec protein translocase complex. Interacts with the SecYEG preprotein conducting channel. SecDF uses the proton motive force (PMF) to complete protein translocation after the ATP-dependent function of SecA. This Koribacter versatilis (strain Ellin345) protein is Protein translocase subunit SecD.